The sequence spans 710 residues: Aminopeptidase P2 (710 aa).

A chloroplast-targeting transit peptide spans 1–79; that stretch reads MIPLTLSSPS…IRKAQTKVVV (79 aa). Positions 147 and 486 each coordinate a peptide. Residues Asp-506, Asp-517, and His-580 each coordinate Mn(2+). The a peptide site is built by His-580, His-589, and Glu-614. Mn(2+) is bound by residues Glu-614 and Glu-628.

It belongs to the peptidase M24B family. As to quaternary structure, homodimer. Mn(2+) is required as a cofactor.

It is found in the plastid. The protein localises to the chloroplast. It catalyses the reaction Release of any N-terminal amino acid, including proline, that is linked to proline, even from a dipeptide or tripeptide.. Its function is as follows. Catalyzes the removal of a penultimate prolyl residue from the N-termini of peptides, such as Arg-Pro-Pro. The polypeptide is Aminopeptidase P2 (Arabidopsis thaliana (Mouse-ear cress)).